Reading from the N-terminus, the 540-residue chain is Phosphoenolpyruvate carboxykinase (ATP) (540 aa).

Arg-65 contributes to the substrate binding site. Position 87 is an N6-acetyllysine (Lys-87). The substrate site is built by Tyr-207 and Lys-213. ATP contacts are provided by residues Lys-213, His-232, and 248–256 (GLSGTGKTT). Mn(2+)-binding residues include Lys-213 and His-232. Position 269 (Asp-269) interacts with Mn(2+). ATP is bound by residues Glu-297, Arg-333, 449–450 (RI), and Thr-455. Arg-333 contributes to the substrate binding site. Lys-523 carries the N6-acetyllysine modification.

The protein belongs to the phosphoenolpyruvate carboxykinase (ATP) family. Monomer. Requires Mn(2+) as cofactor.

The protein resides in the cytoplasm. The catalysed reaction is oxaloacetate + ATP = phosphoenolpyruvate + ADP + CO2. It participates in carbohydrate biosynthesis; gluconeogenesis. Involved in the gluconeogenesis. Catalyzes the conversion of oxaloacetate (OAA) to phosphoenolpyruvate (PEP) through direct phosphoryl transfer between the nucleoside triphosphate and OAA. The polypeptide is Phosphoenolpyruvate carboxykinase (ATP) (Escherichia coli O45:K1 (strain S88 / ExPEC)).